The primary structure comprises 255 residues: Ribonuclease PH (255 aa).

Phosphate contacts are provided by residues R86 and 124-126 (GTR).

The protein belongs to the RNase PH family. As to quaternary structure, homohexameric ring arranged as a trimer of dimers.

It catalyses the reaction tRNA(n+1) + phosphate = tRNA(n) + a ribonucleoside 5'-diphosphate. Functionally, phosphorolytic 3'-5' exoribonuclease that plays an important role in tRNA 3'-end maturation. Removes nucleotide residues following the 3'-CCA terminus of tRNAs; can also add nucleotides to the ends of RNA molecules by using nucleoside diphosphates as substrates, but this may not be physiologically important. Probably plays a role in initiation of 16S rRNA degradation (leading to ribosome degradation) during starvation. This chain is Ribonuclease PH, found in Geobacillus sp. (strain WCH70).